Here is a 94-residue protein sequence, read N- to C-terminus: Large ribosomal subunit protein eL31 (94 aa).

Belongs to the eukaryotic ribosomal protein eL31 family.

The chain is Large ribosomal subunit protein eL31 (rpl31e) from Pyrococcus abyssi (strain GE5 / Orsay).